A 276-amino-acid polypeptide reads, in one-letter code: Hydroxyethylthiazole kinase (276 aa).

Position 48 (Met-48) interacts with substrate. 2 residues coordinate ATP: Arg-124 and Thr-175. Gly-202 contacts substrate.

The protein belongs to the Thz kinase family. The cofactor is Mg(2+).

It catalyses the reaction 5-(2-hydroxyethyl)-4-methylthiazole + ATP = 4-methyl-5-(2-phosphooxyethyl)-thiazole + ADP + H(+). It functions in the pathway cofactor biosynthesis; thiamine diphosphate biosynthesis; 4-methyl-5-(2-phosphoethyl)-thiazole from 5-(2-hydroxyethyl)-4-methylthiazole: step 1/1. Catalyzes the phosphorylation of the hydroxyl group of 4-methyl-5-beta-hydroxyethylthiazole (THZ). This chain is Hydroxyethylthiazole kinase, found in Clostridium beijerinckii (strain ATCC 51743 / NCIMB 8052) (Clostridium acetobutylicum).